A 138-amino-acid chain; its full sequence is Ribosome maturation factor RimP (138 aa).

It belongs to the RimP family.

The protein resides in the cytoplasm. In terms of biological role, required for maturation of 30S ribosomal subunits. In Campylobacter concisus (strain 13826), this protein is Ribosome maturation factor RimP.